A 280-amino-acid chain; its full sequence is Urease accessory protein UreD 1 (280 aa).

Belongs to the UreD family. UreD, UreF and UreG form a complex that acts as a GTP-hydrolysis-dependent molecular chaperone, activating the urease apoprotein by helping to assemble the nickel containing metallocenter of UreC. The UreE protein probably delivers the nickel.

It is found in the cytoplasm. Required for maturation of urease via the functional incorporation of the urease nickel metallocenter. The chain is Urease accessory protein UreD 1 from Brucella melitensis biotype 1 (strain ATCC 23456 / CCUG 17765 / NCTC 10094 / 16M).